A 700-amino-acid polypeptide reads, in one-letter code: MNNLSYLEPDYSEFVEVDPTGRYGRYNEVLGKGASKTVYRAFDEYEGIEVAWNQVKLYDFLQSPEDLERLYCEIHLLKTLKHKNIMKFYTSWVDTANRNINFVTELFTSGTLRQYRLRHKRVNIRAMKHWCRQILRGLHYLHSHDPPVIHRDLKCDNIFVNGNQGEVKIGDLGLAAILRKSHAAHCVGTPEFMAPEVYEEAYNELVDIYSFGMCILEMVTFDYPYSECTHPAQIYKKVMSGKKPDALYKVKDPEVKCFIEKCLATVSLRVSARELLDDPFLRIDDGEFDLRSVDMEDSVGPLYRQPHHLPDYYNYPSNSSSLNRQYSNGNYPSNSSSLNRQYSNGYNSHHEYQNGWAYNPAETEETHGIELFESRNNDDQEEEKKSGNVDITIKGKRRDDGGLFLRLRIADKEGRVRNIYFPFDIETDTALSVATEMVAELDMDDHGVTKIANMIDGEISSLVPSWRPGPEFEECLAAAAAANAASICNNCVSNRTSMGSVMDFLRTNPGANVIQCCRNGCGETHGRFEEITIRETEVRLRELWKLQQQQESRELSSIDSGHNHSEEEEEEEVLYEDPENMFSCEAGNEINHISGSGSFSFMPSKYCDEPSEKTENQVQQELRWLKAKCQIELRDIQDEQLKTRWPESGEEVEISPKDGFLGSVSGLGREEDTVKEMFGERLVPKCLKRTTSLPVDAIDS.

Positions 24–281 constitute a Protein kinase domain; it reads GRYNEVLGKG…ARELLDDPFL (258 aa). ATP contacts are provided by residues 104-107 and Lys-154; that span reads TELF. Asp-171 functions as the Proton acceptor in the catalytic mechanism. A compositionally biased stretch (low complexity) spans 314-339; the sequence is NYPSNSSSLNRQYSNGNYPSNSSSLN. Disordered stretches follow at residues 314–345, 551–575, and 647–666; these read NYPS…YSNG, ESRE…EVLY, and ESGE…SVSG. The segment covering 551–565 has biased composition (basic and acidic residues); it reads ESRELSSIDSGHNHS. A compositionally biased stretch (acidic residues) spans 566–575; that stretch reads EEEEEEEVLY.

This sequence belongs to the protein kinase superfamily. Ser/Thr protein kinase family. WNK subfamily. In terms of processing, autophosphorylated.

The enzyme catalyses L-seryl-[protein] + ATP = O-phospho-L-seryl-[protein] + ADP + H(+). It carries out the reaction L-threonyl-[protein] + ATP = O-phospho-L-threonyl-[protein] + ADP + H(+). Functionally, regulates flowering time by modulating the photoperiod pathway. Phosphorylates APRR3. The protein is Serine/threonine-protein kinase WNK1 (WNK1) of Arabidopsis thaliana (Mouse-ear cress).